We begin with the raw amino-acid sequence, 334 residues long: Fructose-1,6-bisphosphatase class 1 (334 aa).

Mg(2+) contacts are provided by Glu89, Asp112, Leu114, and Asp115. Substrate is bound by residues 115 to 118, Asn208, Tyr241, 259 to 261, and Lys271; these read DGSS and YLY. Mg(2+) is bound at residue Glu277.

Belongs to the FBPase class 1 family. As to quaternary structure, homotetramer. Mg(2+) is required as a cofactor.

Its subcellular location is the cytoplasm. The enzyme catalyses beta-D-fructose 1,6-bisphosphate + H2O = beta-D-fructose 6-phosphate + phosphate. The protein operates within carbohydrate biosynthesis; gluconeogenesis. The sequence is that of Fructose-1,6-bisphosphatase class 1 from Pectobacterium atrosepticum (strain SCRI 1043 / ATCC BAA-672) (Erwinia carotovora subsp. atroseptica).